A 56-amino-acid polypeptide reads, in one-letter code: Small ribosomal subunit protein bS21 (56 aa).

The protein belongs to the bacterial ribosomal protein bS21 family.

This is Small ribosomal subunit protein bS21 (rpsU) from Geobacillus stearothermophilus (Bacillus stearothermophilus).